Here is a 228-residue protein sequence, read N- to C-terminus: 2-C-methyl-D-erythritol 4-phosphate cytidylyltransferase (228 aa).

This sequence belongs to the IspD/TarI cytidylyltransferase family. IspD subfamily.

The enzyme catalyses 2-C-methyl-D-erythritol 4-phosphate + CTP + H(+) = 4-CDP-2-C-methyl-D-erythritol + diphosphate. Its pathway is isoprenoid biosynthesis; isopentenyl diphosphate biosynthesis via DXP pathway; isopentenyl diphosphate from 1-deoxy-D-xylulose 5-phosphate: step 2/6. Functionally, catalyzes the formation of 4-diphosphocytidyl-2-C-methyl-D-erythritol from CTP and 2-C-methyl-D-erythritol 4-phosphate (MEP). The chain is 2-C-methyl-D-erythritol 4-phosphate cytidylyltransferase from Dechloromonas aromatica (strain RCB).